Reading from the N-terminus, the 103-residue chain is Large ribosomal subunit protein bL21 (103 aa).

It belongs to the bacterial ribosomal protein bL21 family. As to quaternary structure, part of the 50S ribosomal subunit. Contacts protein L20.

This protein binds to 23S rRNA in the presence of protein L20. This is Large ribosomal subunit protein bL21 from Borrelia garinii subsp. bavariensis (strain ATCC BAA-2496 / DSM 23469 / PBi) (Borreliella bavariensis).